The primary structure comprises 819 residues: Leucine--tRNA ligase (819 aa).

The 'HIGH' region signature appears at 41-51; sequence PYPSGTLHVGH. The 'KMSKS' region motif lies at 578 to 582; that stretch reads KMSKS. Lys581 is a binding site for ATP.

It belongs to the class-I aminoacyl-tRNA synthetase family.

It localises to the cytoplasm. The enzyme catalyses tRNA(Leu) + L-leucine + ATP = L-leucyl-tRNA(Leu) + AMP + diphosphate. This is Leucine--tRNA ligase from Fervidobacterium nodosum (strain ATCC 35602 / DSM 5306 / Rt17-B1).